The following is a 571-amino-acid chain: Plastidial pyruvate kinase 3, chloroplastic (571 aa).

Residues 1-55 (MAAYGQISSGMTVDPQVLSSSRNIGVSLSPLRRTLIGAGVRSTSISLRQCSLSVR) constitute a chloroplast transit peptide. Substrate is bound at residue Arg129. Asn131, Ser133, Asp164, and Thr165 together coordinate K(+). 131-134 (NMSH) provides a ligand contact to ATP. Arg171 is an ATP binding site. Lys314 serves as a coordination point for substrate. Glu316 lines the Mg(2+) pocket. The substrate site is built by Gly339, Asp340, and Thr372. Asp340 provides a ligand contact to Mg(2+).

The protein belongs to the pyruvate kinase family. As to quaternary structure, oligomer of alpha and beta subunits. Requires Mg(2+) as cofactor. The cofactor is K(+). As to expression, expressed at low levels in roots, leaves, inflorescences, siliques, pollen, seeds and flowers.

It localises to the plastid. The protein resides in the chloroplast stroma. The catalysed reaction is pyruvate + ATP = phosphoenolpyruvate + ADP + H(+). It functions in the pathway carbohydrate degradation; glycolysis; pyruvate from D-glyceraldehyde 3-phosphate: step 5/5. Functionally, required for plastidial pyruvate kinase activity. The polypeptide is Plastidial pyruvate kinase 3, chloroplastic (PKP3) (Arabidopsis thaliana (Mouse-ear cress)).